Reading from the N-terminus, the 336-residue chain is NmrA-like family domain-containing oxidoreductase malD (336 aa).

NADP(+) contacts are provided by residues 12 to 17 (GGTGNQ), 40 to 44 (RDPTS), 61 to 62 (DG), 82 to 84 (TNS), Lys140, and 163 to 166 (FMEA).

The protein belongs to the NmrA-type oxidoreductase family.

NmrA-like family domain-containing oxidoreductase; part of the gene cluster that mediates the biosynthesis of malbrancheamide, a dichlorinated fungal indole alkaloid that belongs to a family of natural products containing a characteristic bicyclo[2.2.2]diazaoctane core. The first step of malbrancheamide biosynthesis involves coupling of L-proline and L-tryptophan by malG, a bimodular NRPS, to produce L-Pro-L-Trp aldehyde through reductive offloading. This compound undergoes spontaneous cyclization and dehydration to give a dienamine which is reverse prenylated at C-2 by malE. The other prenyltransferase present in the cluster, malB, displays modest activity, suggesting that may be a redundant gene in the pathway. Subsequently, a [4+2] Diels-Alder cyclo-addition catalyzed by the bifunctional enzyme malC forms the characteristic bicyclo[2.2.2]diazaoctane ring of premalbrancheamid. Finally, the flavin-dependent halogenase malA catalyzes the iterative dichlorination of the indole ring of premalbrancheamide to yield C-9 monochlorinated malbrancheamide B, C-8 monochlorinated isomalbrancheamide B, and dichlorinated malbrancheamide. MalA is also able to brominate premalbrancheamide at C-9 to yield malbrancheamide C, and, to a lesser extend, at C-8 to yield isomalbrancheamide C. Finally, malA can brominate C-9 monochlorinated malbrancheamide B at C-8 to yield malbrancheamide D, or C-8 monochlorinated isomalbrancheamide B at C-9 to produce isomalbrancheamide D. The chain is NmrA-like family domain-containing oxidoreductase malD from Malbranchea aurantiaca.